The sequence spans 328 residues: Malate dehydrogenase (328 aa).

12-18 (GAAGQIG) is an NAD(+) binding site. Substrate contacts are provided by arginine 95 and arginine 101. NAD(+) is bound by residues asparagine 108, glutamine 115, and 132-134 (VGN). 2 residues coordinate substrate: asparagine 134 and arginine 165. The active-site Proton acceptor is histidine 190.

The protein belongs to the LDH/MDH superfamily. MDH type 2 family.

The enzyme catalyses (S)-malate + NAD(+) = oxaloacetate + NADH + H(+). In terms of biological role, catalyzes the reversible oxidation of malate to oxaloacetate. In Paracidovorax citrulli (strain AAC00-1) (Acidovorax citrulli), this protein is Malate dehydrogenase.